Consider the following 786-residue polypeptide: LPS-assembly protein LptD (786 aa).

Positions 1–24 (MKKRIPTLLATMIASALYSHQGLA) are cleaved as a signal peptide. Disulfide bonds link cysteine 31–cysteine 726 and cysteine 173–cysteine 727.

Belongs to the LptD family. Component of the lipopolysaccharide transport and assembly complex. Interacts with LptE and LptA. Contains two intramolecular disulfide bonds.

The protein localises to the cell outer membrane. In terms of biological role, together with LptE, is involved in the assembly of lipopolysaccharide (LPS) at the surface of the outer membrane. The sequence is that of LPS-assembly protein LptD from Salmonella typhimurium (strain LT2 / SGSC1412 / ATCC 700720).